We begin with the raw amino-acid sequence, 151 residues long: Small ribosomal subunit protein uS15 (151 aa).

It belongs to the universal ribosomal protein uS15 family.

The protein is Small ribosomal subunit protein uS15 (RPS13) of Pisum sativum (Garden pea).